Consider the following 463-residue polypeptide: DNA-binding protein K10 (463 aa).

Positions 1 to 13 (MVSKNQFYQNWTM) are enriched in polar residues. Positions 1 to 304 (MVSKNQFYQN…RNGPGPGPMM (304 aa)) are disordered. Over residues 14-50 (QSQQQHPHQMQQQFQQQQQPNLQHRNNQSNNNNCNNN) the composition is skewed to low complexity. Residues 85–94 (QMMFSSSQMP) show a composition bias toward polar residues. Tandem repeats lie at residues 87–94 (MFSSSQMP), 95–102 (SDPLYIDF), 103–110 (SSPPPGFK), 111–118 (HNQVGSPK), 119–126 (KKSMKGIK), 127–134 (QQQHPSPN), and 135–142 (QQQPPSPN). Positions 87-142 (MFSSSQMPSDPLYIDFSSPPPGFKHNQVGSPKKKSMKGIKQQQHPSPNQQQPPSPN) are 7 X approximate tandem repeats. Low complexity predominate over residues 142–193 (NQQQHPSPNQQQHPSPNQQQHPNSNQQQHLSPNQQQGKMNNQNNNHMNQSQQ). The segment covering 194-214 (PFNNQMNGSDWQRHPGNNPNQ) has biased composition (polar residues). Composition is skewed to pro residues over residues 225–270 (GPPP…PPVP) and 282–291 (GGPPPPPPPL). Residues 397-416 (DELFAQYKGQRDKFVSLYEA) constitute a DNA-binding region (H-T-H motif). The disordered stretch occupies residues 426–463 (AATVKAKDAKSDKDKNAISSQSAAPKAGSAKDATIPNP). A compositionally biased stretch (basic and acidic residues) spans 430-441 (KAKDAKSDKDKN).

In terms of assembly, interacts (via N-terminus) with sqd; the interaction is direct and may be involved in localization of sqd to the oocyte during oogenesis.

Its subcellular location is the nucleus. In terms of biological role, may be involved in localization of sqd to the oocyte during oogenesis. This is DNA-binding protein K10 (fs(1)K10) from Drosophila melanogaster (Fruit fly).